Consider the following 282-residue polypeptide: Bifunctional protein FolD (282 aa).

NADP(+) is bound by residues 164–166 and Ser189; that span reads GRS.

The protein belongs to the tetrahydrofolate dehydrogenase/cyclohydrolase family. Homodimer.

It catalyses the reaction (6R)-5,10-methylene-5,6,7,8-tetrahydrofolate + NADP(+) = (6R)-5,10-methenyltetrahydrofolate + NADPH. The enzyme catalyses (6R)-5,10-methenyltetrahydrofolate + H2O = (6R)-10-formyltetrahydrofolate + H(+). Its pathway is one-carbon metabolism; tetrahydrofolate interconversion. Its function is as follows. Catalyzes the oxidation of 5,10-methylenetetrahydrofolate to 5,10-methenyltetrahydrofolate and then the hydrolysis of 5,10-methenyltetrahydrofolate to 10-formyltetrahydrofolate. This chain is Bifunctional protein FolD, found in Lactobacillus helveticus (strain DPC 4571).